The primary structure comprises 258 residues: Imidazole glycerol phosphate synthase subunit HisF (258 aa).

Active-site residues include aspartate 11 and aspartate 130.

It belongs to the HisA/HisF family. As to quaternary structure, heterodimer of HisH and HisF.

The protein resides in the cytoplasm. The enzyme catalyses 5-[(5-phospho-1-deoxy-D-ribulos-1-ylimino)methylamino]-1-(5-phospho-beta-D-ribosyl)imidazole-4-carboxamide + L-glutamine = D-erythro-1-(imidazol-4-yl)glycerol 3-phosphate + 5-amino-1-(5-phospho-beta-D-ribosyl)imidazole-4-carboxamide + L-glutamate + H(+). It participates in amino-acid biosynthesis; L-histidine biosynthesis; L-histidine from 5-phospho-alpha-D-ribose 1-diphosphate: step 5/9. In terms of biological role, IGPS catalyzes the conversion of PRFAR and glutamine to IGP, AICAR and glutamate. The HisF subunit catalyzes the cyclization activity that produces IGP and AICAR from PRFAR using the ammonia provided by the HisH subunit. In Haemophilus influenzae (strain PittEE), this protein is Imidazole glycerol phosphate synthase subunit HisF.